Here is a 314-residue protein sequence, read N- to C-terminus: Methionyl-tRNA formyltransferase (314 aa).

A (6S)-5,6,7,8-tetrahydrofolate-binding site is contributed by 112 to 115 (SLLP).

The protein belongs to the Fmt family.

It carries out the reaction L-methionyl-tRNA(fMet) + (6R)-10-formyltetrahydrofolate = N-formyl-L-methionyl-tRNA(fMet) + (6S)-5,6,7,8-tetrahydrofolate + H(+). In terms of biological role, attaches a formyl group to the free amino group of methionyl-tRNA(fMet). The formyl group appears to play a dual role in the initiator identity of N-formylmethionyl-tRNA by promoting its recognition by IF2 and preventing the misappropriation of this tRNA by the elongation apparatus. This Legionella pneumophila subsp. pneumophila (strain Philadelphia 1 / ATCC 33152 / DSM 7513) protein is Methionyl-tRNA formyltransferase.